A 343-amino-acid chain; its full sequence is Fructose-1,6-bisphosphatase, cytosolic (343 aa).

Mg(2+)-binding residues include Glu71, Glu100, Asp121, Leu123, and Asp124. Residues 124-127 (DGSS), Asn215, Tyr247, Tyr267, and Lys277 contribute to the substrate site. Mg(2+) is bound at residue Glu283.

It belongs to the FBPase class 1 family. The cofactor is Mg(2+).

It is found in the cytoplasm. It carries out the reaction beta-D-fructose 1,6-bisphosphate + H2O = beta-D-fructose 6-phosphate + phosphate. This Saccharum hybrid (Sugarcane) protein is Fructose-1,6-bisphosphatase, cytosolic (CFBP).